We begin with the raw amino-acid sequence, 321 residues long: Calcium-binding protein LPS1-alpha (321 aa).

8 consecutive EF-hand domains span residues 15–49, 47–82, 85–120, 121–156, 165–200, 200–233, 232–267, and 269–304; these read DAIE…NWTE, WTEE…STKE, YSSD…IYTK, VVDG…KLPI, EYRE…STKY, YSDK…DGVS, VSKD…IYRQ, and VDFE…NCPY. The Ca(2+) site is built by Asp29, Asn31, Asp33, Thr35, Glu40, Asp60, Asn62, Asp64, His66, Glu71, Asp98, Asp100, Asn102, Arg104, Glu109, Asp134, Asp136, Asp138, His140, Glu145, Asp178, Asn180, Asp182, Ser184, Glu189, Asp213, Asn215, Asp217, Arg219, Glu224, Asp245, Asp247, Asn249, Lys251, Glu256, Asp284, Asp286, Tyr288, and Glu293.

Aboral ectoderm, a squamous epithelium covering the surface of the late stage embryo and larva.

Functionally, calcium-binding protein involved in larval development and metamorphosis. Likely to function as calcium buffers mediating the transport of calcium from the sea water to the blastocoel where calcium is required for skeleton formation. The polypeptide is Calcium-binding protein LPS1-alpha (Lytechinus pictus (Painted sea urchin)).